Reading from the N-terminus, the 102-residue chain is Large ribosomal subunit protein bL21 (102 aa).

This sequence belongs to the bacterial ribosomal protein bL21 family. As to quaternary structure, part of the 50S ribosomal subunit. Contacts protein L20.

This protein binds to 23S rRNA in the presence of protein L20. This Geobacillus thermodenitrificans (strain NG80-2) protein is Large ribosomal subunit protein bL21.